The following is a 149-amino-acid chain: Calmodulin (149 aa).

A2 is modified (N-acetylalanine). EF-hand domains follow at residues 8-43 (EQIA…LGQN), 44-79 (PTEA…KMKD), 81-116 (DSEE…LGEK), and 117-149 (LTDE…MTSK). Residues D21, D23, D25, T27, E32, D57, D59, D61, T63, E68, D94, D96, N98, and E105 each coordinate Ca(2+). K116 is modified (N6,N6,N6-trimethyllysine). Ca(2+)-binding residues include D130, D132, D134, Q136, and E141.

This sequence belongs to the calmodulin family.

Its function is as follows. Calmodulin mediates the control of a large number of enzymes, ion channels and other proteins by Ca(2+). Among the enzymes to be stimulated by the calmodulin-Ca(2+) complex are a number of protein kinases and phosphatases. The sequence is that of Calmodulin from Pyuridae sp. (Sea squirt).